Here is a 568-residue protein sequence, read N- to C-terminus: Mannitol 2-dehydrogenase (568 aa).

109-120 provides a ligand contact to NAD(+); it reads IVHVGVGGFHRA.

It belongs to the mannitol dehydrogenase family. Monomer.

The catalysed reaction is D-mannitol + NAD(+) = D-fructose + NADH + H(+). Functionally, catalyzes the NAD(H)-dependent interconversion of D-fructose and D-mannitol in the mannitol metabolic pathway. This Phaeosphaeria nodorum (strain SN15 / ATCC MYA-4574 / FGSC 10173) (Glume blotch fungus) protein is Mannitol 2-dehydrogenase.